A 558-amino-acid polypeptide reads, in one-letter code: 2-hydroxy-7-methoxy-5-methyl-1-naphthoate--CoA ligase (558 aa).

ATP is bound by residues 212–213, 329–331, Val-351, Asp-435, Arg-450, and Lys-542; these read GG and ASR.

The protein belongs to the ATP-dependent AMP-binding enzyme family.

It carries out the reaction 2-hydroxy-7-methoxy-5-methyl-1-naphthoate + ATP + CoA = 2-hydroxy-7-methoxy-5-methyl-1-naphthoyl-CoA + AMP + diphosphate. It participates in antibiotic biosynthesis. In terms of biological role, catalyzes the activation of 2-hydroxy-7-methoxy-5-methyl-1-naphthoate in the biosynthesis of the naphthoate moiety of the neocarzinostatin chromophore. Also catalyzes the activation of other 1-naphthoic acid analogs such as 2-hydroxy-5-methyl-1-naphthoate or 2,7-dihydroxy-5-methyl-1-naphthoate in vitro. This chain is 2-hydroxy-7-methoxy-5-methyl-1-naphthoate--CoA ligase, found in Streptomyces carzinostaticus.